Reading from the N-terminus, the 297-residue chain is Phosphoribosylaminoimidazole-succinocarboxamide synthase (297 aa).

This sequence belongs to the SAICAR synthetase family.

The enzyme catalyses 5-amino-1-(5-phospho-D-ribosyl)imidazole-4-carboxylate + L-aspartate + ATP = (2S)-2-[5-amino-1-(5-phospho-beta-D-ribosyl)imidazole-4-carboxamido]succinate + ADP + phosphate + 2 H(+). The protein operates within purine metabolism; IMP biosynthesis via de novo pathway; 5-amino-1-(5-phospho-D-ribosyl)imidazole-4-carboxamide from 5-amino-1-(5-phospho-D-ribosyl)imidazole-4-carboxylate: step 1/2. This is Phosphoribosylaminoimidazole-succinocarboxamide synthase from Mycobacterium sp. (strain JLS).